We begin with the raw amino-acid sequence, 286 residues long: 4-hydroxybenzoate octaprenyltransferase (286 aa).

A run of 7 helical transmembrane segments spans residues 22-42 (IGTL…EKAM), 45-65 (LSVL…GCVI), 98-118 (LFIV…LYTI), 143-163 (FFLG…TIEA), 213-233 (IIAL…YLSQ), 238-255 (YFIV…QCRL), and 266-286 (NAFL…LFGI).

This sequence belongs to the UbiA prenyltransferase family. It depends on Mg(2+) as a cofactor.

The protein localises to the cell inner membrane. The catalysed reaction is all-trans-octaprenyl diphosphate + 4-hydroxybenzoate = 4-hydroxy-3-(all-trans-octaprenyl)benzoate + diphosphate. It functions in the pathway cofactor biosynthesis; ubiquinone biosynthesis. In terms of biological role, catalyzes the prenylation of para-hydroxybenzoate (PHB) with an all-trans polyprenyl group. Mediates the second step in the final reaction sequence of ubiquinone-8 (UQ-8) biosynthesis, which is the condensation of the polyisoprenoid side chain with PHB, generating the first membrane-bound Q intermediate 3-octaprenyl-4-hydroxybenzoate. The polypeptide is 4-hydroxybenzoate octaprenyltransferase (Histophilus somni (strain 2336) (Haemophilus somnus)).